Consider the following 357-residue polypeptide: Anthranilate phosphoribosyltransferase (357 aa).

5-phospho-alpha-D-ribose 1-diphosphate is bound by residues G91, 94-95, T99, 101-104, 119-127, and S131; these read GD, NIST, and KHGNRSVSS. G91 is a binding site for anthranilate. Residue S103 participates in Mg(2+) binding. Position 122 (N122) interacts with anthranilate. R177 provides a ligand contact to anthranilate. Positions 235 and 236 each coordinate Mg(2+).

This sequence belongs to the anthranilate phosphoribosyltransferase family. Homodimer. Requires Mg(2+) as cofactor.

It catalyses the reaction N-(5-phospho-beta-D-ribosyl)anthranilate + diphosphate = 5-phospho-alpha-D-ribose 1-diphosphate + anthranilate. It participates in amino-acid biosynthesis; L-tryptophan biosynthesis; L-tryptophan from chorismate: step 2/5. In terms of biological role, catalyzes the transfer of the phosphoribosyl group of 5-phosphorylribose-1-pyrophosphate (PRPP) to anthranilate to yield N-(5'-phosphoribosyl)-anthranilate (PRA). In Shewanella baltica (strain OS155 / ATCC BAA-1091), this protein is Anthranilate phosphoribosyltransferase.